The chain runs to 159 residues: MAEQTEKAFLKQPKVFLSSKKSGKGKKPGKGGNRFWKSIGLGFKTPREAIEGTYIDKKCPFTGTVSIRGRIIAGTCHSAKMNRTIIVRRNYLHFVKKYQRYEKRHSNIPAHISPCFRVKEGDHVIIGQCRPLSKTVRFNVVKVIPAGSAAAGKKAFTAA.

This sequence belongs to the universal ribosomal protein uS17 family.

It is found in the cytoplasm. The polypeptide is Small ribosomal subunit protein uS17 (RPS11) (Zea mays (Maize)).